The primary structure comprises 258 residues: Imidazole glycerol phosphate synthase subunit HisF (258 aa).

Catalysis depends on residues Asp-11 and Asp-130.

Belongs to the HisA/HisF family. In terms of assembly, heterodimer of HisH and HisF.

The protein localises to the cytoplasm. The catalysed reaction is 5-[(5-phospho-1-deoxy-D-ribulos-1-ylimino)methylamino]-1-(5-phospho-beta-D-ribosyl)imidazole-4-carboxamide + L-glutamine = D-erythro-1-(imidazol-4-yl)glycerol 3-phosphate + 5-amino-1-(5-phospho-beta-D-ribosyl)imidazole-4-carboxamide + L-glutamate + H(+). It participates in amino-acid biosynthesis; L-histidine biosynthesis; L-histidine from 5-phospho-alpha-D-ribose 1-diphosphate: step 5/9. Functionally, IGPS catalyzes the conversion of PRFAR and glutamine to IGP, AICAR and glutamate. The HisF subunit catalyzes the cyclization activity that produces IGP and AICAR from PRFAR using the ammonia provided by the HisH subunit. The protein is Imidazole glycerol phosphate synthase subunit HisF of Cronobacter sakazakii (strain ATCC BAA-894) (Enterobacter sakazakii).